We begin with the raw amino-acid sequence, 632 residues long: MAU2 chromatid cohesion factor homolog (632 aa).

TPR repeat units follow at residues 453–486 and 493–526; these read GGFYYVQGLHAFHKNSFHEAKRFLRETLKMANAE and SCSLVLLSHVFLSIGNSKESMNMVTPAMQLASKI.

Belongs to the SCC4/mau-2 family. In terms of assembly, interacts with Nipped-B to form the cohesin loading complex.

It localises to the nucleus. The protein localises to the nucleoplasm. In terms of biological role, required for association of the cohesin complex with chromatin during interphase. Plays a role in sister chromatid cohesion and normal progression through prometaphase. The protein is MAU2 chromatid cohesion factor homolog of Drosophila erecta (Fruit fly).